A 925-amino-acid polypeptide reads, in one-letter code: NADH:fumarate oxidoreductase (925 aa).

FMN phosphoryl threonine is present on T447. 7 residues coordinate FAD: A492, E511, N519, T520, A525, G526, and V633. A fumarate-binding site is contributed by A525. A525 contributes to the succinate binding site. 3 residues coordinate succinate: H719, S731, and E732. Fumarate contacts are provided by S731 and E732. R756 serves as the catalytic Proton donor. H859 contributes to the fumarate binding site. H859 is a binding site for succinate. FAD-binding residues include H860 and E889. Positions 899 and 902 each coordinate fumarate. The succinate site is built by R899 and G902. FAD-binding residues include A904 and V905.

Belongs to the FAD-dependent oxidoreductase 2 family. FRD/SDH subfamily. As to quaternary structure, monomer. It depends on FAD as a cofactor. FMN serves as cofactor. Post-translationally, is flavinylated on Thr-447 by ApbE2, encoded in a neighboring gene. Flavinylation is essential for catalytic activity.

It is found in the cytoplasm. The catalysed reaction is succinate + NAD(+) = fumarate + NADH + H(+). Its function is as follows. Catalyzes the anaerobic reduction of fumarate to succinate. Uses NADH as the inherent electron donor in this process. Is involved in anaerobic fumarate respiration in K.pneumoniae. This chain is NADH:fumarate oxidoreductase, found in Klebsiella pneumoniae (strain 342).